A 247-amino-acid chain; its full sequence is Pyridoxine 5'-phosphate synthase (247 aa).

Asparagine 9 serves as a coordination point for 3-amino-2-oxopropyl phosphate. 1-deoxy-D-xylulose 5-phosphate is bound at residue 11–12; that stretch reads DH. Arginine 20 lines the 3-amino-2-oxopropyl phosphate pocket. The active-site Proton acceptor is histidine 45. The 1-deoxy-D-xylulose 5-phosphate site is built by arginine 47 and histidine 52. The active-site Proton acceptor is the glutamate 72. Threonine 102 is a binding site for 1-deoxy-D-xylulose 5-phosphate. Histidine 193 serves as the catalytic Proton donor. 3-amino-2-oxopropyl phosphate is bound by residues glycine 194 and 215–216; that span reads GH.

It belongs to the PNP synthase family. As to quaternary structure, homooctamer; tetramer of dimers.

The protein localises to the cytoplasm. It catalyses the reaction 3-amino-2-oxopropyl phosphate + 1-deoxy-D-xylulose 5-phosphate = pyridoxine 5'-phosphate + phosphate + 2 H2O + H(+). It participates in cofactor biosynthesis; pyridoxine 5'-phosphate biosynthesis; pyridoxine 5'-phosphate from D-erythrose 4-phosphate: step 5/5. Its function is as follows. Catalyzes the complicated ring closure reaction between the two acyclic compounds 1-deoxy-D-xylulose-5-phosphate (DXP) and 3-amino-2-oxopropyl phosphate (1-amino-acetone-3-phosphate or AAP) to form pyridoxine 5'-phosphate (PNP) and inorganic phosphate. This chain is Pyridoxine 5'-phosphate synthase, found in Blochmanniella floridana.